The primary structure comprises 342 residues: MMKMMRNKPTNLPTAGMTNGGRGSGGGGGGGGRESGGRDLEIRPGGMLVQKRNPDLDPVGPPPPPMIRVRIKYGAVYHEINISPQASFGELKKMLTGPTGIHHQDQKLMYKDKERDSKAFLDVSGVKDKSKMVLIEDPLSQEKRFLEMRKIAKTEKASKAISDISLEVDRLGGRVSAFEMVTKKGGKIAEKDLVTVIELLMNELIKLDAIVAEGDVKLQRKMQVKRVQNYVETLDALKVKNSMANGQQKQSSTAQRLAPIQEHNNEERQEQKPIQSLMDMPIQYKEKKQEIEEEPRNSGEGPFVLDSSAKWETFDHHPVTPLSSTTAKNNAIPPRFNWEFFD.

The disordered stretch occupies residues 1-41; it reads MMKMMRNKPTNLPTAGMTNGGRGSGGGGGGGGRESGGRDLE. A compositionally biased stretch (polar residues) spans 8-17; sequence KPTNLPTAGM. A compositionally biased stretch (gly residues) spans 18–34; that stretch reads TNGGRGSGGGGGGGGRE. In terms of domain architecture, Ubiquitin-like spans 65–141; it reads PMIRVRIKYG…MVLIEDPLSQ (77 aa). One can recognise a BAG domain in the interval 160–238; it reads AISDISLEVD…NYVETLDALK (79 aa). S298 carries the post-translational modification Phosphoserine.

In terms of assembly, binds to the ATPase domain of HSP70/HSC70 chaperones.

Its function is as follows. Co-chaperone that regulates diverse cellular pathways, such as programmed cell death and stress responses. The sequence is that of BAG family molecular chaperone regulator 1 (BAG1) from Arabidopsis thaliana (Mouse-ear cress).